The primary structure comprises 158 residues: Pathogenesis-related protein 1 (158 aa).

Belongs to the BetVI family.

It is found in the cytoplasm. The protein is Pathogenesis-related protein 1 (PR1) of Asparagus officinalis (Garden asparagus).